Here is a 441-residue protein sequence, read N- to C-terminus: tRNA (guanine(37)-N(1))-methyltransferase (441 aa).

A mitochondrion-targeting transit peptide spans 1-9 (MFAPPAARA). S-adenosyl-L-methionine-binding positions include Arg221, 248-249 (DL), 276-277 (DG), and Asn331.

It belongs to the class I-like SAM-binding methyltransferase superfamily. TRM5/TYW2 family. Monomer.

The protein localises to the mitochondrion matrix. Its subcellular location is the nucleus. It is found in the cytoplasm. The enzyme catalyses guanosine(37) in tRNA + S-adenosyl-L-methionine = N(1)-methylguanosine(37) in tRNA + S-adenosyl-L-homocysteine + H(+). Functionally, specifically methylates the N1 position of guanosine-37 in various cytoplasmic and mitochondrial tRNAs. Methylation is not dependent on the nature of the nucleoside 5' of the target nucleoside. This is the first step in the biosynthesis of wybutosine (yW), a modified base adjacent to the anticodon of tRNAs and required for accurate decoding. The polypeptide is tRNA (guanine(37)-N(1))-methyltransferase (Phaeosphaeria nodorum (strain SN15 / ATCC MYA-4574 / FGSC 10173) (Glume blotch fungus)).